Reading from the N-terminus, the 602-residue chain is RecBCD enzyme subunit RecD (602 aa).

174-181 (GGPGTGKT) contributes to the ATP binding site.

The protein belongs to the RecD family. In terms of assembly, heterotrimer of RecB, RecC and RecD. All subunits contribute to DNA-binding.

It catalyses the reaction Couples ATP hydrolysis with the unwinding of duplex DNA at the replication fork by translocating in the 5'-3' direction. This creates two antiparallel DNA single strands (ssDNA). The leading ssDNA polymer is the template for DNA polymerase III holoenzyme which synthesizes a continuous strand.. The catalysed reaction is ATP + H2O = ADP + phosphate + H(+). Functionally, a helicase/nuclease that prepares dsDNA breaks (DSB) for recombinational DNA repair. Binds to DSBs and unwinds DNA via a highly rapid and processive ATP-dependent bidirectional helicase activity. Unwinds dsDNA until it encounters a Chi (crossover hotspot instigator) sequence from the 3' direction. Cuts ssDNA a few nucleotides 3' to the Chi site. The properties and activities of the enzyme are changed at Chi. The Chi-altered holoenzyme produces a long 3'-ssDNA overhang and facilitates RecA-binding to the ssDNA for homologous DNA recombination and repair. Holoenzyme degrades any linearized DNA that is unable to undergo homologous recombination. In the holoenzyme this subunit has ssDNA-dependent ATPase and 5'-3' helicase activity. When added to pre-assembled RecBC greatly stimulates nuclease activity and augments holoenzyme processivity. Negatively regulates the RecA-loading ability of RecBCD. This Buchnera aphidicola subsp. Schizaphis graminum (strain Sg) protein is RecBCD enzyme subunit RecD.